The following is a 1242-amino-acid chain: Insulin receptor substrate 1 (1242 aa).

Residue serine 3 is modified to Phosphoserine. Residues 3-137 are mediates interaction with PHIP; it reads SPPESDGFSD…GAGGGGGSCS (135 aa). In terms of domain architecture, PH spans 12-115; sequence DVRKVGYLRK…WYQALLQLHN (104 aa). Position 99 is a phosphoserine; by CK2 (serine 99). Residues 160–264 enclose the IRS-type PTB domain; that stretch reads FKEVWQVILK…EAMRAMSDEF (105 aa). The segment at 262-430 is disordered; sequence DEFRPRSKSQ…SDGGFISSDE (169 aa). Residues 269–281 are compositionally biased toward low complexity; that stretch reads KSQSSSNCSNPIS. Serine 270 and serine 307 each carry phosphoserine; by RPS6KB1. At serine 312 the chain carries Phosphoserine; by IKKB, MAPK8 and RPS6KB1. 5 positions are modified to phosphoserine: serine 315, serine 323, serine 330, serine 345, and serine 348. The span at 354–363 shows a compositional bias: basic residues; the sequence is THAHRHRGSA. Low complexity-rich tracts occupy residues 383 to 404 and 412 to 424; these read SPSA…GSTS and SSAS…SDGG. Position 419 is a phosphoserine (serine 419). Threonine 446 and threonine 453 each carry phosphothreonine. Tyrosine 465 carries the post-translational modification Phosphotyrosine; by INSR. A YXXM motif 1 motif is present at residues 465–468; sequence YICM. A Phosphoserine; by RPS6KB1 modification is found at serine 527. The short motif at 551-554 is the YXXM motif 2 element; it reads YTEM. Basic and acidic residues predominate over residues 592-610; sequence LERRGGHHRPDSSTLHTDD. The disordered stretch occupies residues 592–616; the sequence is LERRGGHHRPDSSTLHTDDGYMPMS. A Phosphotyrosine; by INSR modification is found at tyrosine 612. Residues 612–615 carry the YXXM motif 3 motif; sequence YMPM. A phosphoserine mark is found at serine 616 and serine 629. Tyrosine 632 bears the Phosphotyrosine; by INSR mark. A YXXM motif 4 motif is present at residues 632–635; that stretch reads YMPM. Serine 636 carries the phosphoserine; by RPS6KB1 modification. Tyrosine 662 bears the Phosphotyrosine mark. A YXXM motif 5 motif is present at residues 662–665; sequence YMMM. The tract at residues 668-693 is disordered; that stretch reads SGGCSPDIGGGPSSSSSSSNAVPSGT. The YXXM motif 6 signature appears at 732 to 735; sequence YMNM. Disordered regions lie at residues 771–900 and 918–937; these read FKHT…VNIE and SPSV…EETG. A compositionally biased stretch (basic and acidic residues) spans 776 to 785; the sequence is RPGEPEEGAR. Serine 794 is modified (phosphoserine; by AMPK and SIK2). Positions 801-815 are enriched in low complexity; sequence AATADDSSSSTSSDS. Serine 892 is subject to Phosphoserine. Phosphotyrosine; by INSR is present on tyrosine 896. Positions 896 to 898 are GRB2-binding; sequence YVN. Positions 918-928 are enriched in polar residues; sequence SPSVRCPSQLQ. Tyrosine 941 and tyrosine 989 each carry phosphotyrosine; by INSR. Short sequence motifs (YXXM motif) lie at residues 941 to 944, 989 to 992, and 1012 to 1015; these read YMKM, YMTM, and YADM. The interval 1057–1146 is disordered; the sequence is SSLLGGPQGP…DVKRHSSASF (90 aa). Positions 1073 to 1085 are enriched in polar residues; sequence TRVNLSPNRNQSA. Serine 1100 bears the Phosphoserine mark. Serine 1101 is modified (phosphoserine; by RPS6KB1 and PKC/PRKCQ). The span at 1102–1114 shows a compositional bias: polar residues; that stretch reads ETFSSTPSATRVG. At tyrosine 1179 the chain carries Phosphotyrosine; by INSR. Residues lysine 1186 and lysine 1189 each participate in a glycyl lysine isopeptide (Lys-Gly) (interchain with G-Cter in ubiquitin) cross-link. The segment at 1190-1242 is disordered; sequence QCPQECTPEPQPPPPPPPHQPLGSGESSSTRRSSEDLSAYASISFQKQPEDRQ. Positions 1198-1209 are enriched in pro residues; the sequence is EPQPPPPPPPHQ. The span at 1210–1220 shows a compositional bias: low complexity; that stretch reads PLGSGESSSTR. Tyrosine 1229 carries the post-translational modification Phosphotyrosine; by INSR.

Interacts with UBTF and PIK3CA. Interacts (via phosphorylated YXXM motifs) with PIK3R1. Interacts with ROCK1 and FER. Interacts (via PH domain) with PHIP. Interacts with GRB2. Interacts with SOCS7. Interacts (via IRS-type PTB domain) with IGF1R and INSR (via the tyrosine-phosphorylated NPXY motif). Interacts with ALK. Interacts with EIF2AK2/PKR. Interacts with GKAP1. Interacts with DGKZ in the absence of insulin; insulin stimulation decreases this interaction. Found in a ternary complex with DGKZ and PIP5K1A in the absence of insulin stimulation. Interacts with SQSTM1; the interaction is disrupted by the presence of tensin TNS2. Interacts with NCK1 (via SH2 domain). Interacts with NCK2 (via SH3 domain). Interacts with SH2B1; this interaction enhances leptin-induced activation of the PI3-kinase pathway. Interacts with DVL2; this interaction promotes the Wnt/beta-catenin signaling pathway. Post-translationally, serine phosphorylation of IRS1 is a mechanism for insulin resistance. Ser-307, Ser-312, Ser-315, and Ser-323 phosphorylations inhibit insulin action through disruption of IRS1 interaction with the insulin receptor INSR. Phosphorylation of Tyr-896 is required for GRB2-binding. Phosphorylated by ALK. Phosphorylated at Ser-270, Ser-307, Ser-636 and Ser-1101 by RPS6KB1; phosphorylation induces accelerated degradation of IRS1. Phosphorylated on tyrosine residues in response to insulin. In skeletal muscles, dephosphorylated on Tyr-612 by TNS2 under anabolic conditions; dephosphorylation results in the proteasomal degradation of IRS1. In terms of processing, ubiquitinated by the Cul7-RING(FBXW8) complex in a mTOR-dependent manner, leading to its degradation: the Cul7-RING(FBXW8) complex recognizes and binds IRS1 previously phosphorylated by S6 kinase (RPS6KB1 or RPS6KB2). Ubiquitinated by TRAF4 through 'Lys-29' linkage; this ubiquitination regulates the interaction of IRS1 with IGFR and IRS1 tyrosine phosphorylation upon IGF1 stimulation. S-nitrosylation at by BLVRB inhibits its activity.

Its subcellular location is the cytoplasm. The protein resides in the nucleus. Its function is as follows. Signaling adapter protein that participates in the signal transduction from two prominent receptor tyrosine kinases, insulin receptor/INSR and insulin-like growth factor I receptor/IGF1R. Plays therefore an important role in development, growth, glucose homeostasis as well as lipid metabolism. Upon phosphorylation by the insulin receptor, functions as a signaling scaffold that propagates insulin action through binding to SH2 domain-containing proteins including the p85 regulatory subunit of PI3K, NCK1, NCK2, GRB2 or SHP2. Recruitment of GRB2 leads to the activation of the guanine nucleotide exchange factor SOS1 which in turn triggers the Ras/Raf/MEK/MAPK signaling cascade. Activation of the PI3K/AKT pathway is responsible for most of insulin metabolic effects in the cell, and the Ras/Raf/MEK/MAPK is involved in the regulation of gene expression and in cooperation with the PI3K pathway regulates cell growth and differentiation. Acts a positive regulator of the Wnt/beta-catenin signaling pathway through suppression of DVL2 autophagy-mediated degradation leading to cell proliferation. In Homo sapiens (Human), this protein is Insulin receptor substrate 1 (IRS1).